Reading from the N-terminus, the 637-residue chain is Probable potassium transport system protein Kup (637 aa).

The next 12 membrane-spanning stretches (helical) occupy residues 25-45, 62-82, 115-135, 149-169, 180-200, 227-247, 263-283, 295-315, 352-372, 378-398, 410-430, and 434-454; these read ISLA…LYAI, VLGV…LKYL, WFLV…GMIT, IIAP…LTGL, VGAL…VLGL, LQGF…EALY, ILFV…LLLF, LVPS…TIIA, IYVP…VIGF, LAAA…ILFY, LATN…FGAS, and LFHG…LMLT.

This sequence belongs to the HAK/KUP transporter (TC 2.A.72) family.

The protein resides in the cell inner membrane. It carries out the reaction K(+)(in) + H(+)(in) = K(+)(out) + H(+)(out). Its function is as follows. Transport of potassium into the cell. Likely operates as a K(+):H(+) symporter. The chain is Probable potassium transport system protein Kup from Chlorobium phaeobacteroides (strain DSM 266 / SMG 266 / 2430).